Here is a 106-residue protein sequence, read N- to C-terminus: Iron-sulfur cluster assembly protein CyaY (106 aa).

This sequence belongs to the frataxin family.

Its function is as follows. Involved in iron-sulfur (Fe-S) cluster assembly. May act as a regulator of Fe-S biogenesis. The chain is Iron-sulfur cluster assembly protein CyaY from Escherichia fergusonii (strain ATCC 35469 / DSM 13698 / CCUG 18766 / IAM 14443 / JCM 21226 / LMG 7866 / NBRC 102419 / NCTC 12128 / CDC 0568-73).